A 700-amino-acid chain; its full sequence is Serine/threonine-protein kinase WNK1 (700 aa).

Residues 24–281 enclose the Protein kinase domain; that stretch reads GRYNEVLGKG…ARELLDDPFL (258 aa). Residues 104-107 and lysine 154 contribute to the ATP site; that span reads TELF. Residue aspartate 171 is the Proton acceptor of the active site. Over residues 314–339 the composition is skewed to low complexity; the sequence is NYPSNSSSLNRQYSNGNYPSNSSSLN. 3 disordered regions span residues 314–345, 551–575, and 647–666; these read NYPSNSSSLNRQYSNGNYPSNSSSLNRQYSNG, ESRELSSIDSGHNHSEEEEEEEVLY, and ESGEEVEISPKDGFLGSVSG. Over residues 551–565 the composition is skewed to basic and acidic residues; it reads ESRELSSIDSGHNHS. The segment covering 566–575 has biased composition (acidic residues); the sequence is EEEEEEEVLY.

This sequence belongs to the protein kinase superfamily. Ser/Thr protein kinase family. WNK subfamily. Autophosphorylated.

It carries out the reaction L-seryl-[protein] + ATP = O-phospho-L-seryl-[protein] + ADP + H(+). It catalyses the reaction L-threonyl-[protein] + ATP = O-phospho-L-threonyl-[protein] + ADP + H(+). Its function is as follows. Regulates flowering time by modulating the photoperiod pathway. Phosphorylates APRR3. The protein is Serine/threonine-protein kinase WNK1 (WNK1) of Arabidopsis thaliana (Mouse-ear cress).